Here is a 20-residue protein sequence, read N- to C-terminus: NLYQFGNMIQCTIPGSNPLL.

Ca(2+) is required as a cofactor. In terms of processing, contains seven disulfide bonds. As to expression, expressed by the venom gland.

Its subcellular location is the secreted. It carries out the reaction a 1,2-diacyl-sn-glycero-3-phosphocholine + H2O = a 1-acyl-sn-glycero-3-phosphocholine + a fatty acid + H(+). In terms of biological role, PLA2 catalyzes the calcium-dependent hydrolysis of the 2-acyl groups in 3-sn-phosphoglycerides. This is Phospholipase A2 D5 from Micrurus pyrrhocryptus (Coral snake).